The sequence spans 87 residues: Large ribosomal subunit protein bL31B (87 aa).

Belongs to the bacterial ribosomal protein bL31 family. Type B subfamily. In terms of assembly, part of the 50S ribosomal subunit.

The protein is Large ribosomal subunit protein bL31B of Burkholderia vietnamiensis (strain G4 / LMG 22486) (Burkholderia cepacia (strain R1808)).